We begin with the raw amino-acid sequence, 233 residues long: Uracil-DNA glycosylase (233 aa).

Residue Asp70 is the Proton acceptor of the active site.

This sequence belongs to the uracil-DNA glycosylase (UDG) superfamily. UNG family.

It is found in the cytoplasm. It catalyses the reaction Hydrolyzes single-stranded DNA or mismatched double-stranded DNA and polynucleotides, releasing free uracil.. In terms of biological role, excises uracil residues from the DNA which can arise as a result of misincorporation of dUMP residues by DNA polymerase or due to deamination of cytosine. The sequence is that of Uracil-DNA glycosylase from Helicobacter acinonychis (strain Sheeba).